The primary structure comprises 809 residues: Zinc finger CCCH domain-containing protein 24 (809 aa).

The residue at position 1 (methionine 1) is an N-acetylmethionine. The segment at 1-74 (METSSIEINE…NLESSDTKIT (74 aa)) is disordered. Residues 30-46 (ETSSIDELPSSDSNATD) show a composition bias toward polar residues. The span at 51 to 65 (VGEKRKRADEDEKTN) shows a compositional bias: basic and acidic residues. The C3H1-type zinc finger occupies 79-107 (WWKTSLCSYFRREASCSHGNECKYAHGEA). The S-adenosyl-L-methionine site is built by glutamine 536 and glutamate 586. A disordered region spans residues 652-693 (EEMTNSEHVADQNLPPSNTQVEELQDNEQKDSSSLEPEKTTK). The span at 678–692 (NEQKDSSSLEPEKTT) shows a compositional bias: basic and acidic residues. Aspartate 704 contacts S-adenosyl-L-methionine. The Nucleophile role is filled by cysteine 732.

The protein belongs to the class I-like SAM-binding methyltransferase superfamily. RNA M5U methyltransferase family.

This Arabidopsis thaliana (Mouse-ear cress) protein is Zinc finger CCCH domain-containing protein 24.